A 109-amino-acid polypeptide reads, in one-letter code: ATPase inhibitor, mitochondrial (109 aa).

A mitochondrion-targeting transit peptide spans 1 to 25; the sequence is MAATALAARTRQAVWSVWAMQGRGF. Residues 26–52 form a disordered region; that stretch reads GSESGDNVRSSAGAVRDAGGAFGKREQ. The segment at 26–52 is N-terminal inhibitory region; it reads GSESGDNVRSSAGAVRDAGGAFGKREQ. Residues 69-109 are a coiled coil; the sequence is ALKKHHENEISHHAKEIERLQKEIERHKQSIKKLKQSEDDD. Residues 74–106 are antiparallel alpha-helical coiled coil region; that stretch reads HENEISHHAKEIERLQKEIERHKQSIKKLKQSE. Residue K103 is modified to N6-succinyllysine.

Belongs to the ATPase inhibitor family. As to quaternary structure, homodimer; represents the active form and is present at a pH value below 6.5. Homotetramer; represents the inactive form and is present at a pH value above 7.0.

It localises to the mitochondrion. Its function is as follows. Endogenous F(1)F(o)-ATPase inhibitor limiting ATP depletion when the mitochondrial membrane potential falls below a threshold and the F(1)F(o)-ATP synthase starts hydrolyzing ATP to pump protons out of the mitochondrial matrix. Required to avoid the consumption of cellular ATP when the F(1)F(o)-ATP synthase enzyme acts as an ATP hydrolase. Indirectly acts as a regulator of heme synthesis in erythroid tissues: regulates heme synthesis by modulating the mitochondrial pH and redox potential, allowing FECH to efficiently catalyze the incorporation of iron into protoporphyrin IX to produce heme. This Bos taurus (Bovine) protein is ATPase inhibitor, mitochondrial.